An 84-amino-acid chain; its full sequence is LYR motif-containing protein 5B (84 aa).

The protein belongs to the complex I LYR family.

The sequence is that of LYR motif-containing protein 5B (lyrm5b) from Danio rerio (Zebrafish).